Reading from the N-terminus, the 364-residue chain is UDP-N-acetylglucosamine--N-acetylmuramyl-(pentapeptide) pyrophosphoryl-undecaprenol N-acetylglucosamine transferase (364 aa).

Residues 14 to 16, Asn-126, Arg-163, Ser-190, Ile-246, 265 to 270, and Gln-291 each bind UDP-N-acetyl-alpha-D-glucosamine; these read TGG and ALTVSE.

It belongs to the glycosyltransferase 28 family. MurG subfamily.

The protein resides in the cell inner membrane. The catalysed reaction is di-trans,octa-cis-undecaprenyl diphospho-N-acetyl-alpha-D-muramoyl-L-alanyl-D-glutamyl-meso-2,6-diaminopimeloyl-D-alanyl-D-alanine + UDP-N-acetyl-alpha-D-glucosamine = di-trans,octa-cis-undecaprenyl diphospho-[N-acetyl-alpha-D-glucosaminyl-(1-&gt;4)]-N-acetyl-alpha-D-muramoyl-L-alanyl-D-glutamyl-meso-2,6-diaminopimeloyl-D-alanyl-D-alanine + UDP + H(+). It functions in the pathway cell wall biogenesis; peptidoglycan biosynthesis. Its function is as follows. Cell wall formation. Catalyzes the transfer of a GlcNAc subunit on undecaprenyl-pyrophosphoryl-MurNAc-pentapeptide (lipid intermediate I) to form undecaprenyl-pyrophosphoryl-MurNAc-(pentapeptide)GlcNAc (lipid intermediate II). This is UDP-N-acetylglucosamine--N-acetylmuramyl-(pentapeptide) pyrophosphoryl-undecaprenol N-acetylglucosamine transferase from Shewanella loihica (strain ATCC BAA-1088 / PV-4).